The sequence spans 196 residues: Elongation factor Ts (196 aa).

The segment at 80-83 (TDFV) is involved in Mg(2+) ion dislocation from EF-Tu.

It belongs to the EF-Ts family.

The protein localises to the cytoplasm. In terms of biological role, associates with the EF-Tu.GDP complex and induces the exchange of GDP to GTP. It remains bound to the aminoacyl-tRNA.EF-Tu.GTP complex up to the GTP hydrolysis stage on the ribosome. This chain is Elongation factor Ts, found in Desulfotalea psychrophila (strain LSv54 / DSM 12343).